The primary structure comprises 189 residues: Phosphoheptose isomerase (189 aa).

The region spanning 34-189 is the SIS domain; sequence VADTLKNGKK…CQAVDEAFRG (156 aa). 49–51 contacts substrate; it reads NGG. Zn(2+) is bound by residues His-58 and Glu-62. Residues Glu-62, 91-92, 117-119, Ser-122, and Gln-169 contribute to the substrate site; these read ND and STS. Zn(2+) contacts are provided by Gln-169 and His-177.

It belongs to the SIS family. GmhA subfamily. In terms of assembly, homotetramer. Zn(2+) is required as a cofactor.

The protein localises to the cytoplasm. It catalyses the reaction 2 D-sedoheptulose 7-phosphate = D-glycero-alpha-D-manno-heptose 7-phosphate + D-glycero-beta-D-manno-heptose 7-phosphate. It functions in the pathway carbohydrate biosynthesis; D-glycero-D-manno-heptose 7-phosphate biosynthesis; D-glycero-alpha-D-manno-heptose 7-phosphate and D-glycero-beta-D-manno-heptose 7-phosphate from sedoheptulose 7-phosphate: step 1/1. In terms of biological role, catalyzes the isomerization of sedoheptulose 7-phosphate in D-glycero-D-manno-heptose 7-phosphate. This chain is Phosphoheptose isomerase, found in Campylobacter concisus (strain 13826).